A 95-amino-acid polypeptide reads, in one-letter code: Large ribosomal subunit protein uL23 (95 aa).

This sequence belongs to the universal ribosomal protein uL23 family. As to quaternary structure, part of the 50S ribosomal subunit. Contacts protein L29, and trigger factor when it is bound to the ribosome.

One of the early assembly proteins it binds 23S rRNA. One of the proteins that surrounds the polypeptide exit tunnel on the outside of the ribosome. Forms the main docking site for trigger factor binding to the ribosome. The chain is Large ribosomal subunit protein uL23 from Coxiella burnetii (strain CbuK_Q154) (Coxiella burnetii (strain Q154)).